The primary structure comprises 1186 residues: MYND-type zinc finger-containing chromatin reader ZMYND8 (1186 aa).

Basic and acidic residues predominate over residues 1 to 12; it reads MDISTRSKDPGS. A disordered region spans residues 1–57; the sequence is MDISTRSKDPGSAERTAQKRKFPSPPHSSNGHSPQDTSTSPIKKKKKPGLLNSNNKE. Positions 1-850 are required for interaction with CCNT1; that stretch reads MDISTRSKDP…QQQQQQQNQQ (850 aa). S12 is covalently cross-linked (Glycyl lysine isopeptide (Lys-Gly) (interchain with G-Cter in SUMO2)). At S24 the chain carries Phosphoserine. Residues K56 and K70 each participate in a glycyl lysine isopeptide (Lys-Gly) (interchain with G-Cter in SUMO2) cross-link. An interaction with histone H3K4me0 region spans residues 75-268; it reads TDPVDVVPQD…YLAACQKRDN (194 aa). The interval 75–406 is interaction with histone H3K14ac; it reads TDPVDVVPQD…VKLNFDMTAS (332 aa). The PHD-type zinc finger occupies 88 to 133; it reads DFYCWVCHREGQVLCCELCPRVYHAKCLRLTSEPEGDWFCPECEKI. The interval 88–327 is required for interaction with histone H3 and histone H4; sequence DFYCWVCHRE…INNCYLMSKE (240 aa). Residues C91, C94, C103, C106, H111, C114, C127, and C130 each coordinate Zn(2+). A Bromo domain is found at 145-252; it reads AMTMLTIEQL…KICEHEMNEI (108 aa). 3 residues coordinate Zn(2+): C255, C258, and C274. One can recognise a PWWP domain in the interval 277–327; it reads PHPLVWAKLKGFPFWPAKALRDKDGQVDARFFGQHDRAWVPINNCYLMSKE. Residue K390 forms a Glycyl lysine isopeptide (Lys-Gly) (interchain with G-Cter in SUMO2) linkage. T404 carries the post-translational modification Phosphothreonine. Position 406 is a phosphoserine (S406). Residues 412–512 are disordered; it reads SKPVLSGGTG…TTKTDKTSTT (101 aa). K413 is subject to N6-acetyllysine; alternate. A Glycyl lysine isopeptide (Lys-Gly) (interchain with G-Cter in SUMO2); alternate cross-link involves residue K413. S417, S425, and S432 each carry phosphoserine. Over residues 433–442 the composition is skewed to polar residues; it reads PMSTNSSVHT. A Phosphoserine modification is found at S444. K453 participates in a covalent cross-link: Glycyl lysine isopeptide (Lys-Gly) (interchain with G-Cter in SUMO2). A phosphoserine mark is found at S460, S462, S465, S486, S490, and S495. A compositionally biased stretch (polar residues) spans 472 to 489; it reads STASPASTKTGQAGSLSG. K505 is covalently cross-linked (Glycyl lysine isopeptide (Lys-Gly) (interchain with G-Cter in SUMO2)). 2 positions are modified to phosphoserine: S514 and S523. A Glycyl lysine isopeptide (Lys-Gly) (interchain with G-Cter in SUMO2) cross-link involves residue K530. Phosphothreonine is present on T541. S547 is modified (phosphoserine). Residue K549 forms a Glycyl lysine isopeptide (Lys-Gly) (interchain with G-Cter in SUMO2) linkage. T563 is subject to Phosphothreonine. Residues 582–884 are disordered; sequence TAVEHSDSED…ITQSPSTSTI (303 aa). Composition is skewed to basic and acidic residues over residues 585–597 and 606–631; these read EHSD…KSDS and DEQK…EPSA. Residues K611 and K645 each participate in a glycyl lysine isopeptide (Lys-Gly) (interchain with G-Cter in SUMO2) cross-link. Phosphoserine is present on residues S652 and S655. Over residues 656–696 the composition is skewed to basic and acidic residues; that stretch reads EKADPGAVKDKASPEPEKDFSEKAKPSPHPIKDKLKGKDET. K657 is covalently cross-linked (Glycyl lysine isopeptide (Lys-Gly) (interchain with G-Cter in SUMO2)). Phosphoserine occurs at positions 668, 682, 707, 709, and 737. Residues 718 to 738 are compositionally biased toward basic and acidic residues; it reads GEDHSGREGRKNKKEPKEPSP. At T746 the chain carries Phosphothreonine. A phosphoserine mark is found at S754 and S756. A compositionally biased stretch (low complexity) spans 766 to 799; the sequence is SSAQTSAAGATATTSTSSTVTVTAPAPAATGSPV. Residues 818–832 are compositionally biased toward polar residues; sequence VWNSSSKFQTSSQKW. Low complexity predominate over residues 835–857; it reads QKMQRQQQQQQQQNQQQQPQSSQ. Residues 873–884 show a composition bias toward polar residues; sequence KEITQSPSTSTI. The segment at 875 to 1047 is required for homodimerization; it reads ITQSPSTSTI…YCCWNTSYCD (173 aa). Zn(2+) is bound by residues C1028, C1031, C1039, C1040, C1046, C1050, H1058, and C1062. The MYND-type zinc finger occupies 1028–1062; that stretch reads CANCKKEAIFYCCWNTSYCDYPCQQAHWPEHMKSC. Residues 1028–1062 are required for recruitment to DNA damage sites and for interaction with the NuRD complex, CHD4, HDAC1, HDAC2 and KDM1A; that stretch reads CANCKKEAIFYCCWNTSYCDYPCQQAHWPEHMKSC. Residues 1071-1186 are disordered; sequence QEADAEVNTE…KESRLDTFWD (116 aa). Over residues 1085-1103 the composition is skewed to low complexity; that stretch reads SSQGSSSSTQSAPSETASA. Residues 1104–1116 are compositionally biased toward basic and acidic residues; sequence SKEKETSAEKSKE. A Glycyl lysine isopeptide (Lys-Gly) (interchain with G-Cter in SUMO2) cross-link involves residue K1115. S1119 is subject to Phosphoserine. Residues 1121-1140 are compositionally biased toward polar residues; the sequence is LDLSGSRETPSSILLGSNQG. S1141 carries the post-translational modification Phosphoserine. The interaction with PRKCB1 stretch occupies residues 1147-1186; that stretch reads NKSSWSSSDEKRGSTRSDHNTSTSTKSLLPKESRLDTFWD. Basic and acidic residues-rich tracts occupy residues 1154-1165 and 1175-1186; these read SDEKRGSTRSDH and LPKESRLDTFWD.

In terms of assembly, monomer and homodimer. Interacts with NuRD subcomplexes containing GATAD2A. Interacts with the histone deacetylase NuRD complex subunit CHD4; the interaction is direct, appears to occur with monomeric ZMYND8, and is increased following DNA damage. Interacts (via N-terminus) with the P-TEFb complex subunit CCNT1 (via central region); the interaction is direct and the association appears to occur between homodimeric ZMYND8 and the activated form of the P-TEFb complex. Interacts (via N-terminus) with DBN1 (via ADF-H domain); the interaction leads to sequestering of ZMYND8 in the cytoplasm. Interacts with the P-TEFb complex subunit CDK9; the association appears to occur between homodimeric ZMYND8 and the activated form of the P-TEFb complex. Interacts with EZH2; the interaction is dependent on the presence of chromatin. Interacts (via MYND domain) with the NuRD complex subunit GATAD2A. Interacts with histone H3 (via N-terminus) that is both methylated at 'Lys-4' (H3K4me1) and acetylated at 'Lys-14' (H3K14ac), with histone H3 (via N-terminus) unmodified at 'Lys-4' (H3K4me0) and acetylated at 'Lys-14' (H3K14ac), and with histone H3 (via N-terminus) di-methylated at 'Lys-36' (H3K36me2). Interacts (via Bromo domain) with histone H4 acetylated at 'Lys-16' (H4K16ac). Interacts with HDAC1. Interacts with HDAC2. Interacts with KDM1A. Interacts with KDM5C. Interacts with KDM5D. Interacts in vitro with PRKCB. Interacts with RNA polymerase II subunit POLR2A phosphorylated at 'Ser-5'. Interacts with ZNF592. Interacts with ZNF687. Does not interact with GATAD2B. As to expression, expressed in neurons (at protein level). Absent in astrocytes (at protein level). Expressed in all tissues examined with highest expression in brain, lung, pancreas, and placenta. Expressed in cutaneous T-cell lymphomas (CTCL).

The protein localises to the nucleus. The protein resides in the chromosome. It localises to the cytoplasm. Its function is as follows. Chromatin reader that recognizes dual histone modifications such as histone H3.1 dimethylated at 'Lys-36' and histone H4 acetylated at 'Lys-16' (H3.1K36me2-H4K16ac) and histone H3 methylated at 'Lys-4' and histone H4 acetylated at 'Lys-14' (H3K4me1-H3K14ac). May act as a transcriptional corepressor for KDM5D by recognizing the dual histone signature H3K4me1-H3K14ac. May also act as a transcriptional corepressor for KDM5C and EZH2. Recognizes acetylated histone H4 and recruits the NuRD chromatin remodeling complex to damaged chromatin for transcriptional repression and double-strand break repair by homologous recombination. Also activates transcription elongation by RNA polymerase II through recruiting the P-TEFb complex to target promoters. Localizes to H3.1K36me2-H4K16ac marks at all-trans-retinoic acid (ATRA)-responsive genes and positively regulates their expression. Promotes neuronal differentiation by associating with regulatory regions within the MAPT gene, to enhance transcription of a protein-coding MAPT isoform and suppress the non-coding MAPT213 isoform. Suppresses breast cancer, and prostate cancer cell invasion and metastasis. This chain is MYND-type zinc finger-containing chromatin reader ZMYND8 (ZMYND8), found in Homo sapiens (Human).